A 141-amino-acid polypeptide reads, in one-letter code: Large ribosomal subunit protein uL11 (141 aa).

It belongs to the universal ribosomal protein uL11 family. Part of the ribosomal stalk of the 50S ribosomal subunit. Interacts with L10 and the large rRNA to form the base of the stalk. L10 forms an elongated spine to which L12 dimers bind in a sequential fashion forming a multimeric L10(L12)X complex. In terms of processing, one or more lysine residues are methylated.

In terms of biological role, forms part of the ribosomal stalk which helps the ribosome interact with GTP-bound translation factors. In Prochlorococcus marinus (strain NATL1A), this protein is Large ribosomal subunit protein uL11.